The sequence spans 417 residues: Gamma-glutamyl phosphate reductase (417 aa).

The protein belongs to the gamma-glutamyl phosphate reductase family.

The protein localises to the cytoplasm. It carries out the reaction L-glutamate 5-semialdehyde + phosphate + NADP(+) = L-glutamyl 5-phosphate + NADPH + H(+). It participates in amino-acid biosynthesis; L-proline biosynthesis; L-glutamate 5-semialdehyde from L-glutamate: step 2/2. In terms of biological role, catalyzes the NADPH-dependent reduction of L-glutamate 5-phosphate into L-glutamate 5-semialdehyde and phosphate. The product spontaneously undergoes cyclization to form 1-pyrroline-5-carboxylate. The sequence is that of Gamma-glutamyl phosphate reductase from Streptococcus agalactiae serotype III (strain NEM316).